Consider the following 120-residue polypeptide: Large ribosomal subunit protein bL20 (120 aa).

Belongs to the bacterial ribosomal protein bL20 family.

Functionally, binds directly to 23S ribosomal RNA and is necessary for the in vitro assembly process of the 50S ribosomal subunit. It is not involved in the protein synthesizing functions of that subunit. The protein is Large ribosomal subunit protein bL20 of Ureaplasma urealyticum serovar 10 (strain ATCC 33699 / Western).